The sequence spans 538 residues: Phosphoenolpyruvate carboxykinase (ATP) (538 aa).

Substrate contacts are provided by arginine 64, tyrosine 205, and lysine 211. ATP contacts are provided by residues lysine 211, histidine 230, and 246 to 254 (GLSGTGKTT). Lysine 211 and histidine 230 together coordinate Mn(2+). Aspartate 267 contacts Mn(2+). ATP is bound by residues glutamate 295, arginine 331, 447–448 (RI), and threonine 453. Position 331 (arginine 331) interacts with substrate.

It belongs to the phosphoenolpyruvate carboxykinase (ATP) family. As to quaternary structure, monomer. Mn(2+) serves as cofactor.

The protein localises to the cytoplasm. It carries out the reaction oxaloacetate + ATP = phosphoenolpyruvate + ADP + CO2. It participates in carbohydrate biosynthesis; gluconeogenesis. Its function is as follows. Involved in the gluconeogenesis. Catalyzes the conversion of oxaloacetate (OAA) to phosphoenolpyruvate (PEP) through direct phosphoryl transfer between the nucleoside triphosphate and OAA. This Mannheimia succiniciproducens (strain KCTC 0769BP / MBEL55E) protein is Phosphoenolpyruvate carboxykinase (ATP).